Reading from the N-terminus, the 341-residue chain is Methionine import ATP-binding protein MetN 2 (341 aa).

Residues 2 to 241 enclose the ABC transporter domain; the sequence is IELKEVVKEY…PQHTVTKRFV (240 aa). Residue 38–45 participates in ATP binding; sequence GFSGAGKS.

The protein belongs to the ABC transporter superfamily. Methionine importer (TC 3.A.1.24) family. In terms of assembly, the complex is composed of two ATP-binding proteins (MetN), two transmembrane proteins (MetI) and a solute-binding protein (MetQ).

It localises to the cell membrane. It carries out the reaction L-methionine(out) + ATP + H2O = L-methionine(in) + ADP + phosphate + H(+). The enzyme catalyses D-methionine(out) + ATP + H2O = D-methionine(in) + ADP + phosphate + H(+). Part of the ABC transporter complex MetNIQ involved in methionine import. Responsible for energy coupling to the transport system. The chain is Methionine import ATP-binding protein MetN 2 from Staphylococcus aureus (strain bovine RF122 / ET3-1).